The sequence spans 363 residues: GDSL esterase/lipase At1g29670 (363 aa).

A signal peptide spans Met1–Ala24. The Nucleophile role is filled by Ser39. Active-site residues include Asp327 and His330.

Belongs to the 'GDSL' lipolytic enzyme family.

It localises to the secreted. The polypeptide is GDSL esterase/lipase At1g29670 (Arabidopsis thaliana (Mouse-ear cress)).